The primary structure comprises 210 residues: Large ribosomal subunit protein uL3 (210 aa).

The disordered stretch occupies residues 131–154; it reads GPMSHGSKYHRRVGSMGATTDPGR.

This sequence belongs to the universal ribosomal protein uL3 family. Part of the 50S ribosomal subunit. Forms a cluster with proteins L14 and L19.

Its function is as follows. One of the primary rRNA binding proteins, it binds directly near the 3'-end of the 23S rRNA, where it nucleates assembly of the 50S subunit. This chain is Large ribosomal subunit protein uL3, found in Thermoanaerobacter pseudethanolicus (strain ATCC 33223 / 39E) (Clostridium thermohydrosulfuricum).